The following is a 659-amino-acid chain: MTSTSKAVELQLQVKHNAEELQDFMRDLEHWEKTMRQKDLELRRQSGVPEENLPPIRNGSFRKKKKRKTKDSSKKTKEENTKNRIKSFDYDAWAKLDVDSILDELDKEDSTHDSVSQESESDEDGVRVDSQKALVLKEKGNKYFKQGKYDEAIECYTKGMDADPYNPVLPTNRASAYFRLKKFAVAESDCNLAIALSRSYTKAYARRGAARFALQKLEDARKDYVKVLELEPDNFEATNELRKIDQALTSKENSHPKDIAAVIKPAEGERKANEDQRGRQKAIAEKDLGNGFFKEGKYEQAIECYTRGIAADSTNALLPANRAMAYLKVQKYEEAERDCTQAILLDGSYSKAFARRGTARTFLGKINEAKQDFETVLLLEPGNKQAVTELSRIKKELIEKGRWDDVFLDSTQRHNVVKPVDSPHRGSPKALKKVFIEETGNLIESVDAPESSATVPESDRAAVAVDTGRKKDFSQGDSVSSGETPRAKVLKIEAVGDSSAPQAQVDVKQGVRQSVSEKTSVRVAQTPGQLAAVVLPPVPANSFQLESDFRQLRSSPEMLYQYVKKIEPSLYPKLFQKNLDPDVFNQIIKILHDFYVEREKPALIFEVLERLSQLRRFDMAVMFMSGTERELTKVLFNHLEKSELKEDSVEELKKRYGGG.

At Thr-2 the chain carries N-acetylthreonine. A TPR 1 repeat occupies 8 to 41; it reads VELQLQVKHNAEELQDFMRDLEHWEKTMRQKDLE. A disordered region spans residues 39 to 81; sequence DLELRRQSGVPEENLPPIRNGSFRKKKKRKTKDSSKKTKEENT. The segment covering 60–69 has biased composition (basic residues); sequence SFRKKKKRKT. A compositionally biased stretch (basic and acidic residues) spans 70 to 81; the sequence is KDSSKKTKEENT. A phosphoserine mark is found at Ser-87, Ser-116, Ser-119, and Ser-121. A disordered region spans residues 107–128; it reads KEDSTHDSVSQESESDEDGVRV. TPR repeat units lie at residues 133–166, 168–200, 201–234, 282–315, 317–349, and 350–383; these read ALVLKEKGNKYFKQGKYDEAIECYTKGMDADPYN, VLPTNRASAYFRLKKFAVAESDCNLAIALSRSY, TKAYARRGAARFALQKLEDARKDYVKVLELEPDN, AIAEKDLGNGFFKEGKYEQAIECYTRGIAADSTN, LLPANRAMAYLKVQKYEEAERDCTQAILLDGSY, and SKAFARRGTARTFLGKINEAKQDFETVLLLEPGN. Residues 447–485 are disordered; that stretch reads DAPESSATVPESDRAAVAVDTGRKKDFSQGDSVSSGETP. The residue at position 474 (Ser-474) is a Phosphoserine. A Glycyl lysine isopeptide (Lys-Gly) (interchain with G-Cter in SUMO2) cross-link involves residue Lys-491.

It belongs to the RPAP3 family. In terms of assembly, tightly associated with the RNA polymerase II complex. Component of the R2TP complex composed at least of RUVBL1, RUVBL2, RPAP3 and PIHD1. Component of the PAQosome complex which is responsible for the biogenesis of several protein complexes and which consists of R2TP complex members RUVBL1, RUVBL2, RPAP3 and PIH1D1, URI complex members PFDN2, PFDN6, PDRG1, UXT and URI1 as well as ASDURF, POLR2E and DNAAF10/WDR92. Interacts with PIH1D1. Interacts with TSC1 and TSC2. Interacts with PRPF8 and EFTUD2 in a ZNHIT2-dependent manner.

Forms an interface between the RNA polymerase II enzyme and chaperone/scaffolding protein, suggesting that it is required to connect RNA polymerase II to regulators of protein complex formation. This chain is RNA polymerase II-associated protein 3 (Rpap3), found in Rattus norvegicus (Rat).